A 187-amino-acid chain; its full sequence is Elongation factor P (187 aa).

This sequence belongs to the elongation factor P family.

Its subcellular location is the cytoplasm. It functions in the pathway protein biosynthesis; polypeptide chain elongation. Its function is as follows. Involved in peptide bond synthesis. Stimulates efficient translation and peptide-bond synthesis on native or reconstituted 70S ribosomes in vitro. Probably functions indirectly by altering the affinity of the ribosome for aminoacyl-tRNA, thus increasing their reactivity as acceptors for peptidyl transferase. The sequence is that of Elongation factor P from Paenarthrobacter aurescens (strain TC1).